A 715-amino-acid polypeptide reads, in one-letter code: ATP-dependent DNA helicase Hel308 (715 aa).

ATP-binding positions include glutamine 35 and 53 to 60; that span reads SPTGSGKT. The 164-residue stretch at 40–203 folds into the Helicase ATP-binding domain; it reads KKGLLDGNRL…WLGAEPVATN (164 aa). A DEAH box motif is present at residues 152–155; it reads DELH. The region spanning 236-442 is the Helicase C-terminal domain; the sequence is HGDDAIIAYT…ERAFYTFLLG (207 aa).

The protein belongs to the helicase family. Hel308 subfamily. Monomer. Interacts with PINA ATPase which decreases both DNA helicase activities of this protein.

The catalysed reaction is Couples ATP hydrolysis with the unwinding of duplex DNA by translocating in the 3'-5' direction.. The enzyme catalyses ATP + H2O = ADP + phosphate + H(+). It catalyses the reaction Couples ATP hydrolysis with the unwinding of duplex DNA at the replication fork by translocating in the 5'-3' direction. This creates two antiparallel DNA single strands (ssDNA). The leading ssDNA polymer is the template for DNA polymerase III holoenzyme which synthesizes a continuous strand.. PINA inhibits the (weak) 5'-3' but not the 3'-5' helicase activity of this protein on overhang substrates. Its function is as follows. DNA-dependent ATPase and 3'-5' DNA helicase that may be involved in repair of stalled replication forks. Functionally, has predominantly 3'-5' helicase activity but also a weak 5'-3' helicase activity. Has the ability to unwind replication forks, preferentially removing the lagging strand. Hjc, Hjm (Hel308) and branch migration ATPase PINA coordinate HJ migration and cleavage of replication forks in a coordinated way. The chain is ATP-dependent DNA helicase Hel308 from Saccharolobus islandicus (strain REY15A) (Sulfolobus islandicus).